The following is a 239-amino-acid chain: mRNA turnover protein 4 homolog (239 aa).

Positions 215 to 239 (FQQMGDDLPESASESTEESDSEDDD) are disordered. Residues S225, S229, and S233 each carry the phosphoserine modification. The span at 229 to 239 (STEESDSEDDD) shows a compositional bias: acidic residues.

The protein belongs to the universal ribosomal protein uL10 family. As to quaternary structure, associates with the pre-60S ribosomal particle. Interacts with MINAS-60 (product of an alternative open reading frame of RBM10).

The protein resides in the nucleus. Its subcellular location is the nucleolus. It localises to the cytoplasm. Functionally, component of the ribosome assembly machinery. Nuclear paralog of the ribosomal protein P0, it binds pre-60S subunits at an early stage of assembly in the nucleolus, and is replaced by P0 in cytoplasmic pre-60S subunits and mature 80S ribosomes. This is mRNA turnover protein 4 homolog (MRTO4) from Homo sapiens (Human).